The sequence spans 674 residues: Ribosome biogenesis protein BOP1 homolog (674 aa).

A disordered region spans residues 1–28; sequence MASTSAATPLKNKRKFENGKKKPKTLKD. Over residues 15-28 the composition is skewed to basic and acidic residues; sequence KFENGKKKPKTLKD. WD repeat units lie at residues 342-384, 386-425, 427-458, 459-500, 503-541, 587-626, and 643-674; these read GHTG…KTFQ, DGEV…RLHV, QTEA…LMLK, MPNE…SQCP, KRKG…LVKK, HHTA…DFVK, and PNDL…LFTY.

The protein belongs to the WD repeat BOP1/ERB1 family.

Its subcellular location is the nucleus. The protein localises to the nucleolus. The protein resides in the nucleoplasm. Its function is as follows. Required for maturation of ribosomal RNAs and formation of the large ribosomal subunit. The sequence is that of Ribosome biogenesis protein BOP1 homolog from Caenorhabditis elegans.